The following is a 317-amino-acid chain: Putative 2-hydroxyacid dehydrogenase SA2098 (317 aa).

Residues 155 to 156 (EI), 234 to 236 (ASR), and D260 each bind NAD(+). R236 is a catalytic residue. E265 is a catalytic residue. Catalysis depends on H283, which acts as the Proton donor. 283-286 (HIGN) is an NAD(+) binding site.

Belongs to the D-isomer specific 2-hydroxyacid dehydrogenase family.

The chain is Putative 2-hydroxyacid dehydrogenase SA2098 from Staphylococcus aureus (strain N315).